Here is a 339-residue protein sequence, read N- to C-terminus: MIVNDNQNILYVGIDFGYSKTVIMTSRGKSLSLKSLVGYPKDFVGLARLGRPYLVGDEAFEMRSYLHLRNPLLDGLLNPISEQDIDVTRHFISHIIKCAEPAAGEKVFAVIGVTPRFTAANKKLLLKLAQEYCQNVLLMSAPFLAGNSIGKASGSIIIDIGAWTTDICAMKGRIPRPEDQSSIAKAGSYIDERLKNSILERYPALQINANIARMVKEQFAFVGRPQLVAACEFRSAGKAVRCDVTEQVRAACESPFAEIAERIGAVLCVVPPEDQALVLKNIVITGAGAQIRGLPEYVKSMLAPYGDARVSIANEPLMEACKGALSMAQEIPPHFWGQL.

Residues 18 to 19 (YS), Asp74, 162 to 164 (AWT), and 216 to 220 (KEQFA) each bind ATP.

The protein belongs to the FtsA/MreB family. MamK subfamily. In terms of assembly, forms cytoplasmic filament polymers. Forms filaments with MamK.

Its subcellular location is the cytoplasm. It localises to the cytoskeleton. It catalyses the reaction ATP + H2O = ADP + phosphate + H(+). In terms of biological role, protein with ATPase activity which forms pole-to-pole filaments in vivo, probably with MamK. Efficient filament formation requires MamK. Probably promotes turnover of MamK filaments, by providing a monomer pool. In vivo, in the absence of its paralog MamK, forms thin filaments from pole to pole. In vitro forms straight filaments and bundles in the absence of ATP. Filament formation is triggered by KCl and MgCl(2); polymerizes more slowly and makes thinner filaments than MamK. Expression in E.coli yields a filament in the cell's longitudinal axis; the protein nucleates at one pole or the cell septum. This chain is MamK-like protein, found in Paramagnetospirillum magneticum (strain ATCC 700264 / AMB-1) (Magnetospirillum magneticum).